The primary structure comprises 351 residues: Glycerol-3-phosphate dehydrogenase [NAD(P)+] (351 aa).

Serine 18, tryptophan 19, arginine 38, and lysine 122 together coordinate NADPH. Sn-glycerol 3-phosphate is bound by residues lysine 122, glycine 153, and serine 155. Alanine 157 is an NADPH binding site. Lysine 208, aspartate 261, serine 271, arginine 272, and asparagine 273 together coordinate sn-glycerol 3-phosphate. Catalysis depends on lysine 208, which acts as the Proton acceptor. Arginine 272 lines the NADPH pocket. Glutamate 297 contacts NADPH.

This sequence belongs to the NAD-dependent glycerol-3-phosphate dehydrogenase family.

It is found in the cytoplasm. The catalysed reaction is sn-glycerol 3-phosphate + NAD(+) = dihydroxyacetone phosphate + NADH + H(+). The enzyme catalyses sn-glycerol 3-phosphate + NADP(+) = dihydroxyacetone phosphate + NADPH + H(+). It functions in the pathway membrane lipid metabolism; glycerophospholipid metabolism. Catalyzes the reduction of the glycolytic intermediate dihydroxyacetone phosphate (DHAP) to sn-glycerol 3-phosphate (G3P), the key precursor for phospholipid synthesis. The sequence is that of Glycerol-3-phosphate dehydrogenase [NAD(P)+] from Bordetella bronchiseptica (strain ATCC BAA-588 / NCTC 13252 / RB50) (Alcaligenes bronchisepticus).